The following is an 88-amino-acid chain: LYR motif-containing protein 2 (88 aa).

Residues 1 to 19 (MAASRLPPAALTLKQFMRR) constitute a mitochondrion transit peptide.

It belongs to the complex I LYR family.

Its subcellular location is the mitochondrion. Functionally, involved in efficient integration of the N-module into mitochondrial respiratory chain complex I. This is LYR motif-containing protein 2 (Lyrm2) from Mus musculus (Mouse).